The following is a 112-amino-acid chain: Large ribosomal subunit protein uL22 (112 aa).

It belongs to the universal ribosomal protein uL22 family. In terms of assembly, part of the 50S ribosomal subunit.

Functionally, this protein binds specifically to 23S rRNA; its binding is stimulated by other ribosomal proteins, e.g. L4, L17, and L20. It is important during the early stages of 50S assembly. It makes multiple contacts with different domains of the 23S rRNA in the assembled 50S subunit and ribosome. Its function is as follows. The globular domain of the protein is located near the polypeptide exit tunnel on the outside of the subunit, while an extended beta-hairpin is found that lines the wall of the exit tunnel in the center of the 70S ribosome. The protein is Large ribosomal subunit protein uL22 of Finegoldia magna (strain ATCC 29328 / DSM 20472 / WAL 2508) (Peptostreptococcus magnus).